Consider the following 138-residue polypeptide: Putative pre-16S rRNA nuclease (138 aa).

It belongs to the YqgF nuclease family.

It localises to the cytoplasm. In terms of biological role, could be a nuclease involved in processing of the 5'-end of pre-16S rRNA. The protein is Putative pre-16S rRNA nuclease of Caldicellulosiruptor bescii (strain ATCC BAA-1888 / DSM 6725 / KCTC 15123 / Z-1320) (Anaerocellum thermophilum).